We begin with the raw amino-acid sequence, 361 residues long: Outer mitochondrial transmembrane helix translocase (361 aa).

Topologically, residues 1–15 (MVHAEAFSRPLSRNE) are mitochondrial intermembrane. Residues 16-32 (VVGLIFRLTIFGAVTYF) traverse the membrane as a helical segment. Residues 33 to 361 (TIKWMVDAID…QSVLTHVCLD (329 aa)) lie on the Cytoplasmic side of the membrane. 133 to 140 (GPPGCGKT) is an ATP binding site. Ser322 carries the post-translational modification Phosphoserine.

Belongs to the AAA ATPase family. MSP1 subfamily. In terms of assembly, interacts with GRIA2 and GRIP1 in an ATP-dependent manner. ATAD1-catalyzed ATP hydrolysis disrupts not only its binding to GRIA2 and GRIP1, but also interaction between GRIP1 and GRIA2, leading to AMPAR complex disassembly.

The protein resides in the mitochondrion outer membrane. The protein localises to the peroxisome membrane. It localises to the postsynaptic cell membrane. The enzyme catalyses [protein]-with a C-terminal TM segment(out) + ATP + H2O = [protein]-with a C-terminal TM segment(in) + ADP + phosphate + H(+). Functionally, outer mitochondrial translocase required to remove mislocalized tail-anchored transmembrane proteins on mitochondria. Specifically recognizes and binds tail-anchored transmembrane proteins: acts as a dislocase that mediates the ATP-dependent extraction of mistargeted tail-anchored transmembrane proteins from the mitochondrion outer membrane. Also plays a critical role in regulating the surface expression of AMPA receptors (AMPAR), thereby regulating synaptic plasticity and learning and memory. Required for NMDA-stimulated AMPAR internalization and inhibition of GRIA1 and GRIA2 recycling back to the plasma membrane; these activities are ATPase-dependent. In Rattus norvegicus (Rat), this protein is Outer mitochondrial transmembrane helix translocase.